A 136-amino-acid chain; its full sequence is Small ribosomal subunit protein uS8c (136 aa).

This sequence belongs to the universal ribosomal protein uS8 family. In terms of assembly, part of the 30S ribosomal subunit.

The protein localises to the plastid. It is found in the chloroplast. In terms of biological role, one of the primary rRNA binding proteins, it binds directly to 16S rRNA central domain where it helps coordinate assembly of the platform of the 30S subunit. The sequence is that of Small ribosomal subunit protein uS8c (rps8) from Citrus sinensis (Sweet orange).